A 245-amino-acid chain; its full sequence is Uracil-DNA glycosylase (245 aa).

Residue D82 is the Proton acceptor of the active site.

The protein belongs to the uracil-DNA glycosylase (UDG) superfamily. UNG family.

It localises to the cytoplasm. It carries out the reaction Hydrolyzes single-stranded DNA or mismatched double-stranded DNA and polynucleotides, releasing free uracil.. In terms of biological role, excises uracil residues from the DNA which can arise as a result of misincorporation of dUMP residues by DNA polymerase or due to deamination of cytosine. This Deinococcus geothermalis (strain DSM 11300 / CIP 105573 / AG-3a) protein is Uracil-DNA glycosylase.